Consider the following 795-residue polypeptide: RalBP1-associated Eps domain-containing protein 1 (795 aa).

The EH 1 domain maps to E10 to A113. The interval L112 to P238 is disordered. A compositionally biased stretch (polar residues) spans S115 to Y126. Phosphoserine is present on residues S145, S162, S166, and S170. Residues E156–Q168 show a composition bias toward low complexity. Position 173 is a phosphothreonine (T173). Low complexity predominate over residues G205–A216. A phosphoserine mark is found at S272 and S273. Residues Q285 to L374 enclose the EH 2 domain. At Y288 the chain carries Phosphotyrosine. S307 is modified (phosphoserine). One can recognise an EF-hand domain in the interval L318–R353. Ca(2+) contacts are provided by D331, D333, D335, and E342. 2 disordered regions span residues V380 to T433 and E469 to T720. Residues L407–T433 are compositionally biased toward polar residues. Phosphoserine is present on residues S475, S482, and S489. Composition is skewed to polar residues over residues I497–F518 and I525–N542. Phosphoserine is present on S539. Residue T543 is modified to Phosphothreonine. A compositionally biased stretch (pro residues) spans T543 to Q553. S561 carries the phosphoserine modification. Residues L562 to G573 show a composition bias toward polar residues. A compositionally biased stretch (low complexity) spans Q574–P583. Over residues P584–A595 the composition is skewed to pro residues. Polar residues-rich tracts occupy residues T611 to E622 and A681 to T692. The interaction with RALBP1 stretch occupies residues H651–L795. A compositionally biased stretch (basic and acidic residues) spans K707–T720. Phosphoserine occurs at positions 708 and 739. Residues S750–R790 are a coiled coil.

Homodimer (Potential). Interacts with RALBP1, CRK and GRB2. Binding to RALBP1 does not affect its Ral-binding activity. Forms a complex with the SH3 domains of CRK and GRB2 which may link it to an EGF-responsive tyrosine kinase. Interacts with RAB11FIP2. Interacts with AMPH, ITSN1 (via SH3 domains) and SGIP1; may be involved in clathrin-mediated endocytosis. In terms of processing, EGF stimulates phosphorylation on Tyr-residues. In terms of tissue distribution, expressed in all tissues examined. The highest level expression was found in the kidney and testis.

Its subcellular location is the membrane. It localises to the clathrin-coated pit. Its function is as follows. May coordinate the cellular actions of activated EGF receptors and Ral-GTPases. The polypeptide is RalBP1-associated Eps domain-containing protein 1 (Reps1) (Mus musculus (Mouse)).